The chain runs to 101 residues: Small ribosomal subunit protein uS14 (101 aa).

This sequence belongs to the universal ribosomal protein uS14 family. Part of the 30S ribosomal subunit. Contacts proteins S3 and S10.

In terms of biological role, binds 16S rRNA, required for the assembly of 30S particles and may also be responsible for determining the conformation of the 16S rRNA at the A site. The sequence is that of Small ribosomal subunit protein uS14 from Chelativorans sp. (strain BNC1).